A 1103-amino-acid polypeptide reads, in one-letter code: Retinal guanylyl cyclase 1 (1103 aa).

The signal sequence occupies residues 1–51; sequence MTACARRAGGLPDPGLCGPAWWAPSLPRLPRALPRLPLLLLLLLLQPPALS. Residues 52–462 are Extracellular-facing; sequence AVFTVGVLGP…PNNICGGGLE (411 aa). N-linked (GlcNAc...) asparagine glycosylation occurs at asparagine 297. The chain crosses the membrane as a helical span at residues 463-487; the sequence is PGLVFLGFLLVVGMGLAGAFLAHYV. At 488-1103 the chain is on the cytoplasmic side; the sequence is RHRLLHMQMV…LEKARPGQFS (616 aa). One can recognise a Protein kinase domain in the interval 525–808; sequence QGSRSSLGAR…DHTFDLFKNI (284 aa). Positions 880-1010 constitute a Guanylate cyclase domain; the sequence is TLYFSDIVGF…DTVNTASRME (131 aa). The segment at 1065 to 1103 is disordered; the sequence is PIPKPPDLQPGSSNHGISLQEIPPERRRKLEKARPGQFS.

Belongs to the adenylyl cyclase class-4/guanylyl cyclase family. As to quaternary structure, homodimer; requires homodimerization for guanylyl cyclase activity. Interacts with RD3; promotes the exit of GUCY2D from the endoplasmic reticulum and its trafficking to the photoreceptor outer segments. Interaction with RD3 negatively regulates guanylate cyclase activity. Retina.

It localises to the photoreceptor outer segment membrane. The protein localises to the endoplasmic reticulum membrane. The catalysed reaction is GTP = 3',5'-cyclic GMP + diphosphate. With respect to regulation, activated by GUCA1A when free calcium ions concentration is low, and inhibited by GUCA1A when free calcium ions concentration is high. Negatively regulated by RD3; inhibits the basal and GUCA1A-stimulated guanylate cyclase activity. In terms of biological role, catalyzes the synthesis of cyclic GMP (cGMP) in rods and cones of photoreceptors. Plays an essential role in phototransduction, by mediating cGMP replenishment. May also participate in the trafficking of membrane-asociated proteins to the photoreceptor outer segment membrane. The chain is Retinal guanylyl cyclase 1 (GUCY2D) from Homo sapiens (Human).